Reading from the N-terminus, the 1053-residue chain is 3-hydroxy-3-methylglutaryl-coenzyme A reductase (1053 aa).

The Cytoplasmic portion of the chain corresponds to 1-8 (MIYKLAAR). The helical transmembrane segment at 9-29 (YPIQVIAIVGILVSMAYFSFL) threads the bilayer. Over 30-203 (EALTQEDFPV…LKIASQASKT (174 aa)) the chain is Lumenal. Asn-137 carries N-linked (GlcNAc...) asparagine glycosylation. The chain crosses the membrane as a helical span at residues 204-224 (ELLIVGTAYACMLISIVSLYL). Residues 204–365 (ELLIVGTAYA…FSFFVAILTL (162 aa)) form the SSD domain. Over 225-232 (KMRRLGSK) the chain is Cytoplasmic. A helical membrane pass occupies residues 233–253 (FWLFFSVLLSTLFSVQFAMTL). Residues 254–258 (VRASG) are Lumenal-facing. A helical transmembrane segment spans residues 259-279 (VRISLVSLIESLPFLINVVAL). Over 280 to 320 (DKAAELTRQVITRCSVSDSHSPMHEDIAKACRNAAPPILRH) the chain is Cytoplasmic. 2 consecutive transmembrane segments (helical) span residues 321 to 341 (FSFG…IKQF) and 342 to 362 (FLFA…FVAI). The Cytoplasmic segment spans residues 363-417 (LTLKLEMRRYNAKDDVRKVLIEEGLSESTARHVADGNDSSATTSAGSRYFKVRYG). The chain crosses the membrane as a helical span at residues 418–438 (TKIILFIFIAFNLFELCSIPF). The Lumenal segment spans residues 439–526 (KHYAATSAAA…NNWSHYISAS (88 aa)). Residue Asn-518 is glycosylated (N-linked (GlcNAc...) asparagine). A helical membrane pass occupies residues 527 to 547 (FLSKWIVCALSLSIAVNVFLL). The Cytoplasmic segment spans residues 548-1053 (NAARLNSIKE…KSVNSRVPGR (506 aa)). The Charge relay system role is filled by Glu-712. Residue 718-724 (STMRGCK) participates in CoA binding. Residues 779–781 (SRF) and 806–814 (DAMGMNMIS) contribute to the NADP(+) site. Lys-846 (charge relay system) is an active-site residue. 875-877 (VLK) provides a ligand contact to CoA. Asp-922 acts as the Charge relay system in catalysis. 1017-1018 (SH) lines the CoA pocket. The active-site Proton donor is the His-1018. Residue 1022–1023 (NR) coordinates NADP(+). Ser-1024 bears the Phosphoserine mark. Phosphothreonine is present on Thr-1028. Residues 1028 to 1053 (TPAMDSSAKKPATDALKSVNSRVPGR) form a disordered region.

It belongs to the HMG-CoA reductase family.

It is found in the endoplasmic reticulum membrane. It localises to the nucleus envelope. It carries out the reaction (R)-mevalonate + 2 NADP(+) + CoA = (3S)-3-hydroxy-3-methylglutaryl-CoA + 2 NADPH + 2 H(+). The protein operates within metabolic intermediate biosynthesis; (R)-mevalonate biosynthesis; (R)-mevalonate from acetyl-CoA: step 3/3. Functionally, part of the first module of ergosterol biosynthesis pathway that includes the early steps of the pathway, conserved across all eukaryotes, and which results in the formation of mevalonate from acetyl-coenzyme A (acetyl-CoA). Hmg1 catalyzes the reduction of hydroxymethylglutaryl-CoA (HMG-CoA) to mevalonate. The first module starts with the action of the cytosolic acetyl-CoA acetyltransferase eg10 that catalyzes the formation of acetoacetyl-CoA. The hydroxymethylglutaryl-CoA synthases erg13 then condenses acetyl-CoA with acetoacetyl-CoA to form HMG-CoA. The rate-limiting step of the early module is the reduction to mevalonate by the 3-hydroxy-3-methylglutaryl-coenzyme A (HMG-CoA) reductases hcs1. The polypeptide is 3-hydroxy-3-methylglutaryl-coenzyme A reductase (Schizosaccharomyces pombe (strain 972 / ATCC 24843) (Fission yeast)).